Consider the following 235-residue polypeptide: Serine protease SplA (235 aa).

Positions methionine 1–alanine 35 are cleaved as a signal peptide. Catalysis depends on charge relay system residues histidine 74, aspartate 113, and serine 189.

It belongs to the peptidase S1B family.

The protein localises to the secreted. The polypeptide is Serine protease SplA (splA) (Staphylococcus aureus).